Reading from the N-terminus, the 104-residue chain is Secretoglobin family 3A member 1 (104 aa).

Positions 1–21 (MKLTTTFLVLCVALLSDSGVA) are cleaved as a signal peptide.

It belongs to the secretoglobin family. UGRP subfamily. Homodimer; disulfide-linked. In terms of tissue distribution, highly expressed in lung, where it localizes to epithelial cells lining the trachea and bronchi. Expression in lung is mainly restricted to bronchi, submucosal glands of the trachea, and tracheal epithelium, with little expression in terminal bronchioles. Expressed in uterus where it localizes to epithelial cells of the uterine glands. Also detected in heart, stomach and small intestine.

The protein resides in the secreted. Functionally, secreted cytokine-like protein. Inhibits cell growth in vitro. The polypeptide is Secretoglobin family 3A member 1 (Scgb3a1) (Mus musculus (Mouse)).